Consider the following 336-residue polypeptide: TBC1 domain family member 21 (336 aa).

One can recognise a Rab-GAP TBC domain in the interval 57–265 (GLHPFVRTEA…RLWEVLLTGK (209 aa)).

Interacts with ACTB. Interacts with ARMC12, TOMM20, DNAH7 and RAP1A. Interacts with RAB10. As to expression, expressed in round and elongated spermatids (at protein level). Expressed specifically in adult testis and very weakly in fetal brain.

The protein resides in the cytoplasmic vesicle. It is found in the secretory vesicle. It localises to the acrosome. The protein localises to the cytoplasm. Its subcellular location is the cytoskeleton. Acts as a GTPase-activating protein for Rab family protein(s). Essential for the establishment of male fertility, and is required for both the production of normal sperm number and sperm function. Plays an important role in the formation of intact mitochondria, outer dense fibers and axoneme within the sperm tail. Essential for sperm mitochondrial sheath formation and for the interactions of ARMC12 with VDAC2 and VDAC3. May be involved in acrosome formation and cytoskeletal reorganization during spermiogenesis, possibly by regulating RAB3A activity. This is TBC1 domain family member 21 (TBC1D21) from Homo sapiens (Human).